A 443-amino-acid chain; its full sequence is Mevalonate kinase (443 aa).

ATP is bound by residues lysine 12, serine 138, and 143–149 (GAGLGSS). Mg(2+) contacts are provided by serine 149 and glutamate 191. Aspartate 202 serves as the catalytic Proton acceptor.

The protein belongs to the GHMP kinase family. Mevalonate kinase subfamily. As to quaternary structure, homodimer. The cofactor is Mg(2+).

It is found in the cytoplasm. It localises to the cytosol. It carries out the reaction (R)-mevalonate + ATP = (R)-5-phosphomevalonate + ADP + H(+). The protein operates within isoprenoid biosynthesis; isopentenyl diphosphate biosynthesis via mevalonate pathway; isopentenyl diphosphate from (R)-mevalonate: step 1/3. Farnesyl pyrophosphate and geranyl pyrophosphate inhibit mevalonate kinase by binding competitively at the ATP-binding site. Functionally, mevalonate kinase; part of the second module of ergosterol biosynthesis pathway that includes the middle steps of the pathway. ERG12 converts mevalonate into 5-phosphomevalonate. The second module is carried out in the vacuole and involves the formation of farnesyl diphosphate, which is also an important intermediate in the biosynthesis of ubiquinone, dolichol, heme and prenylated proteins. Activity by the mevalonate kinase ERG12 first converts mevalonate into 5-phosphomevalonate. 5-phosphomevalonate is then further converted to 5-diphosphomevalonate by the phosphomevalonate kinase ERG8. The diphosphomevalonate decarboxylase MVD1/ERG19 then produces isopentenyl diphosphate. The isopentenyl-diphosphate delta-isomerase IDI1 then catalyzes the 1,3-allylic rearrangement of the homoallylic substrate isopentenyl (IPP) to its highly electrophilic allylic isomer, dimethylallyl diphosphate (DMAPP). Finally the farnesyl diphosphate synthase ERG20 catalyzes the sequential condensation of isopentenyl pyrophosphate with dimethylallyl pyrophosphate, and then with the resultant geranylpyrophosphate to the ultimate product farnesyl pyrophosphate. This chain is Mevalonate kinase, found in Saccharomyces cerevisiae (strain ATCC 204508 / S288c) (Baker's yeast).